We begin with the raw amino-acid sequence, 476 residues long: MADSKEGVLPLTAASTAPISFGFTRTSARRRLADSGDGAGPSPEEKDFLKTVEGRELQSVKPQEAPKELVIPLIQNGHRRQPPARPPGPSTDTGALADGVVSQAVKELIAESKKSLEERENAGVDPTLAIPMIQKGCTPSGEGADSEPRAETVPEEANYEAVPVEAYGLAMLRGMGWKPGEGIGRTFNQVVKPRVNSLRPKGLGLGANLTEAQALTPTGPSRMPRPDEEQEKDKEDQPQGLVPGGAVVVLSGPHRGLYGKVEGLDPDNVRAMVRLAVGSRVVTVSEYYLRPVSQQEFDKNTLDLRQQNGTASSRKTLWNQELYIQQDNSERKRKHLPDRQDGPAAKSEKAAPRSQHWLHRDLRVRFVDNMYKGGQYYNTKMIIEDVLSPDTCVCRTDEGRVLEGLREDMLETLVPKAEGDRVMVVLGPQTGRVGHLLSRDRARSRALVQLPRENQVVELHYDAICQYMGPSDTDDD.

A disordered region spans residues 1-96 (MADSKEGVLP…PGPSTDTGAL (96 aa)). Position 2 is an N-acetylalanine (Ala-2). A Glycyl lysine isopeptide (Lys-Gly) (interchain with G-Cter in SUMO2) cross-link involves residue Lys-5. A compositionally biased stretch (polar residues) spans 13 to 26 (AASTAPISFGFTRT). At Ser-27 the chain carries Phosphoserine; by PKA. A phosphoserine mark is found at Ser-35 and Ser-42. Basic and acidic residues predominate over residues 43–58 (PEEKDFLKTVEGRELQ). Phosphoserine is present on Ser-115. Positions 164–210 (VEAYGLAMLRGMGWKPGEGIGRTFNQVVKPRVNSLRPKGLGLGANLT) constitute a G-patch domain. The segment at 203–244 (LGLGANLTEAQALTPTGPSRMPRPDEEQEKDKEDQPQGLVPG) is disordered. Residues 210–219 (TEAQALTPTG) are compositionally biased toward polar residues. Thr-216 bears the Phosphothreonine mark. Residues 224 to 237 (PRPDEEQEKDKEDQ) show a composition bias toward basic and acidic residues. One can recognise a KOW 1 domain in the interval 240–267 (GLVPGGAVVVLSGPHRGLYGKVEGLDPD). Thr-316 bears the Phosphothreonine; by PKA mark. The tract at residues 327 to 353 (DNSERKRKHLPDRQDGPAAKSEKAAPR) is disordered. The segment covering 337-351 (PDRQDGPAAKSEKAA) has biased composition (basic and acidic residues). The 28-residue stretch at 415-442 (PKAEGDRVMVVLGPQTGRVGHLLSRDRA) folds into the KOW 2 domain. At Ser-471 the chain carries Phosphoserine. Thr-473 carries the phosphothreonine modification.

Belongs to the MOS2 family. Component of the minor spliceosome, which splices U12-type introns. Interacts with PRKX. Interacts with DHX16. Interacts with PRKACB. Post-translationally, phosphorylation regulates its ability to bind RNA.

The protein resides in the nucleus. In terms of biological role, RNA-binding protein involved in pre-mRNA splicing. As a component of the minor spliceosome, involved in the splicing of U12-type introns in pre-mRNAs. In Homo sapiens (Human), this protein is G-patch domain and KOW motifs-containing protein (GPKOW).